Consider the following 143-residue polypeptide: uncharacterized protein (143 aa).

Residues 1 to 24 form the signal peptide; sequence MKKMLMLAFTFLLALTIHVGEASA.

This is an uncharacterized protein from Bacillus subtilis (strain 168).